The sequence spans 458 residues: Cell division protein FtsZ (458 aa).

Residues 22–26 (GAGGN), 109–111 (GTG), glutamate 140, arginine 144, and aspartate 188 each bind GTP. The tract at residues 319–458 (KAEEEASKQP…IPFFKHRRQD (140 aa)) is disordered. The span at 368 to 379 (NTISHEAPTQSI) shows a compositional bias: polar residues. Basic and acidic residues predominate over residues 401–418 (KQDRKENNRPQPVENKEK). The segment covering 425–439 (SFSSDDSTSISQIET) has biased composition (low complexity).

The protein belongs to the FtsZ family. As to quaternary structure, homodimer. Polymerizes to form a dynamic ring structure in a strictly GTP-dependent manner. Interacts directly with several other division proteins.

The protein localises to the cytoplasm. Essential cell division protein that forms a contractile ring structure (Z ring) at the future cell division site. The regulation of the ring assembly controls the timing and the location of cell division. One of the functions of the FtsZ ring is to recruit other cell division proteins to the septum to produce a new cell wall between the dividing cells. Binds GTP and shows GTPase activity. The chain is Cell division protein FtsZ from Lactobacillus johnsonii (strain CNCM I-12250 / La1 / NCC 533).